The primary structure comprises 1053 residues: DNA-directed RNA polymerase subunit beta' (1053 aa).

Zn(2+) is bound by residues cysteine 60, cysteine 62, cysteine 75, and cysteine 78. Residues aspartate 449, aspartate 451, and aspartate 453 each contribute to the Mg(2+) site.

It belongs to the RNA polymerase beta' chain family. The RNAP catalytic core consists of 2 alpha, 1 beta, 1 beta' and 1 omega subunit. When a sigma factor is associated with the core the holoenzyme is formed, which can initiate transcription. It depends on Mg(2+) as a cofactor. Zn(2+) serves as cofactor.

It catalyses the reaction RNA(n) + a ribonucleoside 5'-triphosphate = RNA(n+1) + diphosphate. In terms of biological role, DNA-dependent RNA polymerase catalyzes the transcription of DNA into RNA using the four ribonucleoside triphosphates as substrates. In Brochothrix thermosphacta (Microbacterium thermosphactum), this protein is DNA-directed RNA polymerase subunit beta'.